The primary structure comprises 724 residues: Phosphoribosylformylglycinamidine synthase subunit PurL (724 aa).

Histidine 34 is an active-site residue. Residues tyrosine 37 and lysine 75 each contribute to the ATP site. Residue glutamate 77 participates in Mg(2+) binding. Substrate is bound by residues 78-81 (SHNH) and arginine 100. Histidine 79 (proton acceptor) is an active-site residue. Aspartate 101 is a Mg(2+) binding site. Residue glutamine 221 coordinates substrate. Residue aspartate 249 coordinates Mg(2+). 292–294 (ESQ) contacts substrate. Positions 478 and 515 each coordinate ATP. Serine 518 contributes to the substrate binding site.

Belongs to the FGAMS family. In terms of assembly, monomer. Part of the FGAM synthase complex composed of 1 PurL, 1 PurQ and 2 PurS subunits.

Its subcellular location is the cytoplasm. The catalysed reaction is N(2)-formyl-N(1)-(5-phospho-beta-D-ribosyl)glycinamide + L-glutamine + ATP + H2O = 2-formamido-N(1)-(5-O-phospho-beta-D-ribosyl)acetamidine + L-glutamate + ADP + phosphate + H(+). The protein operates within purine metabolism; IMP biosynthesis via de novo pathway; 5-amino-1-(5-phospho-D-ribosyl)imidazole from N(2)-formyl-N(1)-(5-phospho-D-ribosyl)glycinamide: step 1/2. Its function is as follows. Part of the phosphoribosylformylglycinamidine synthase complex involved in the purines biosynthetic pathway. Catalyzes the ATP-dependent conversion of formylglycinamide ribonucleotide (FGAR) and glutamine to yield formylglycinamidine ribonucleotide (FGAM) and glutamate. The FGAM synthase complex is composed of three subunits. PurQ produces an ammonia molecule by converting glutamine to glutamate. PurL transfers the ammonia molecule to FGAR to form FGAM in an ATP-dependent manner. PurS interacts with PurQ and PurL and is thought to assist in the transfer of the ammonia molecule from PurQ to PurL. The sequence is that of Phosphoribosylformylglycinamidine synthase subunit PurL from Caldivirga maquilingensis (strain ATCC 700844 / DSM 13496 / JCM 10307 / IC-167).